The primary structure comprises 524 residues: Protein MGF 505-2R (524 aa).

It belongs to the asfivirus MGF 505 family.

In terms of biological role, plays a role in virus cell tropism, and may be required for efficient virus replication in macrophages. This chain is Protein MGF 505-2R, found in Ornithodoros (relapsing fever ticks).